The following is a 552-amino-acid chain: MHCERFLCVLRIIGTTLFGVSLLLGITAAYIVGYQFIQTDNYYFSFGLYGAFLASHLIIQSLFAFLEHRKMKKSLETPIKLNKTVALCIAAYQEDPDYLRKCLQSVKRLTYPGIKVVMVIDGNSDDDLYMMDIFSEVMGRDKSATYIWKNNFHEKGPGETEESHKESSQHVTQLVLSNKSICIMQKWGGKREVMYTAFRALGRSVDYVQVCDSDTMLDPASSVEMVKVLEEDPMVGGVGGDVQILNKYDSWISFLSSVRYWMAFNIERACQSYFGCVQCISGPLGMYRNSLLHEFVEDWYNQEFMGNQCSFGDDRHLTNRVLSLGYATKYTARSKCLTETPIEYLRWLNQQTRWSKSYFREWLYNAMWFHKHHLWMTYEAVITGFFPFFLIATVIQLFYRGKIWNILLFLLTVQLVGLIKSSFASCLRGNIVMVFMSLYSVLYMSSLLPAKMFAIATINKAGWGTSGRKTIVVNFIGLIPVSVWFTILLGGVIFTIYKESKKPFSESKQTVLIVGTLIYACYWVMLLTLYVVLINKCGRRKKGQQYDMVLDV.

Over 1-11 (MHCERFLCVLR) the chain is Cytoplasmic. A helical membrane pass occupies residues 12 to 32 (IIGTTLFGVSLLLGITAAYIV). Residues 33–45 (GYQFIQTDNYYFS) are Extracellular-facing. The helical transmembrane segment at 46–66 (FGLYGAFLASHLIIQSLFAFL) threads the bilayer. At 67–374 (EHRKMKKSLE…NAMWFHKHHL (308 aa)) the chain is on the cytoplasmic side. Phosphothreonine is present on T110. Residue K190 forms a Glycyl lysine isopeptide (Lys-Gly) (interchain with G-Cter in ubiquitin) linkage. S221 is a glycosylation site (O-linked (GlcNAc) serine). Phosphothreonine is present on T328. Residues 375 to 395 (WMTYEAVITGFFPFFLIATVI) traverse the membrane as a helical segment. Residues 396–402 (QLFYRGK) are Extracellular-facing. The helical transmembrane segment at 403 to 423 (IWNILLFLLTVQLVGLIKSSF) threads the bilayer. Residues 424–429 (ASCLRG) are Cytoplasmic-facing. Residues 430–450 (NIVMVFMSLYSVLYMSSLLPA) form a helical membrane-spanning segment. Residues 451–475 (KMFAIATINKAGWGTSGRKTIVVNF) are Extracellular-facing. The chain crosses the membrane as a helical span at residues 476–496 (IGLIPVSVWFTILLGGVIFTI). Topologically, residues 497–510 (YKESKKPFSESKQT) are cytoplasmic. Residues 511 to 531 (VLIVGTLIYACYWVMLLTLYV) traverse the membrane as a helical segment. Topologically, residues 532–552 (VLINKCGRRKKGQQYDMVLDV) are extracellular.

The protein belongs to the NodC/HAS family. In terms of assembly, homodimer; dimerization promotes enzymatic activity. Forms heterodimer with HAS3. Forms heterodimer with HAS1. It depends on Mg(2+) as a cofactor. Phosphorylation at Thr-328 is essential for hyaluronan synthase activity. Post-translationally, O-GlcNAcylation at Ser-221 increases the stability of HAS2 and plasma membrane localization. In terms of processing, ubiquitination at Lys-190; this ubiquitination is essential for hyaluronan synthase activity and homo- or hetero-oligomerization. Can also be poly-ubiquitinated. Deubiquitinated by USP17L22/USP17 and USP4. USP17L22/USP17 efficiently removes 'Lys-63'- and 'Lys-48'-linked polyubiquitin chains, whereas USP4 preferentially removes monoubiquitination and, partially, both 'Lys-63'- and 'Lys-48'-linked polyubiquitin chain. In terms of tissue distribution, expressed in heart, brain, spleen, lung and skeletal muscle.

Its subcellular location is the cell membrane. It is found in the endoplasmic reticulum membrane. It localises to the vesicle. The protein localises to the golgi apparatus membrane. The protein resides in the lysosome. The enzyme catalyses [hyaluronan](n) + UDP-N-acetyl-alpha-D-glucosamine = N-acetyl-beta-D-glucosaminyl-(1-&gt;4)-[hyaluronan](n) + UDP + H(+). The catalysed reaction is N-acetyl-beta-D-glucosaminyl-(1-&gt;4)-[hyaluronan](n) + UDP-alpha-D-glucuronate = [hyaluronan](n+1) + UDP + H(+). It functions in the pathway glycan biosynthesis; hyaluronan biosynthesis. Functionally, catalyzes the addition of GlcNAc or GlcUA monosaccharides to the nascent hyaluronan polymer. Therefore, it is essential to hyaluronan synthesis a major component of most extracellular matrices that has a structural role in tissues architectures and regulates cell adhesion, migration and differentiation. This is one of the isozymes catalyzing that reaction and it is particularly responsible for the synthesis of high molecular mass hyaluronan. Required for the transition of endocardial cushion cells into mesenchymal cells, a process crucial for heart development. May also play a role in vasculogenesis. High molecular mass hyaluronan also play a role in early contact inhibition a process which stops cell growth when cells come into contact with each other or the extracellular matrix. In terms of biological role, catalyzes the addition of GlcNAc or GlcUA monosaccharides to the nascent hyaluronan polymer. Therefore, it is essential to hyaluronan synthesis a major component of most extracellular matrices that has a structural role in tissues architectures and regulates cell adhesion, migration and differentiation. This is one of three isoenzymes responsible for cellular hyaluronan synthesis and it is particularly responsible for the synthesis of high molecular mass hyaluronan. In Mus musculus (Mouse), this protein is Hyaluronan synthase 2.